Here is a 276-residue protein sequence, read N- to C-terminus: Probable ribose-5-phosphate isomerase 3, chloroplastic (276 aa).

Residues 1 to 39 (MASLSFVSSSHLTLRTPSIALRSTGSSPRTSVSFSVKAQ) constitute a chloroplast transit peptide. Ser40 bears the N-acetylserine mark. At Ser108 the chain carries Phosphoserine.

The protein belongs to the ribose 5-phosphate isomerase family. Post-translationally, phosphorylated by SRK2C.

The protein resides in the plastid. The protein localises to the chloroplast. The enzyme catalyses aldehydo-D-ribose 5-phosphate = D-ribulose 5-phosphate. It functions in the pathway carbohydrate degradation; pentose phosphate pathway; D-ribose 5-phosphate from D-ribulose 5-phosphate (non-oxidative stage): step 1/1. Its function is as follows. Catalyzes the reversible conversion of ribose-5-phosphate to ribulose 5-phosphate. This chain is Probable ribose-5-phosphate isomerase 3, chloroplastic (RPI3), found in Arabidopsis thaliana (Mouse-ear cress).